We begin with the raw amino-acid sequence, 73 residues long: Translation initiation factor IF-1 (73 aa).

One can recognise an S1-like domain in the interval 1-73 (MSKKKDVIEM…TRGRITYRYK (73 aa)).

This sequence belongs to the IF-1 family. Component of the 30S ribosomal translation pre-initiation complex which assembles on the 30S ribosome in the order IF-2 and IF-3, IF-1 and N-formylmethionyl-tRNA(fMet); mRNA recruitment can occur at any time during PIC assembly.

The protein localises to the cytoplasm. Functionally, one of the essential components for the initiation of protein synthesis. Stabilizes the binding of IF-2 and IF-3 on the 30S subunit to which N-formylmethionyl-tRNA(fMet) subsequently binds. Helps modulate mRNA selection, yielding the 30S pre-initiation complex (PIC). Upon addition of the 50S ribosomal subunit IF-1, IF-2 and IF-3 are released leaving the mature 70S translation initiation complex. The chain is Translation initiation factor IF-1 from Roseiflexus castenholzii (strain DSM 13941 / HLO8).